Reading from the N-terminus, the 98-residue chain is uncharacterized protein (98 aa).

The 85-residue stretch at 1–85 folds into the STAS domain; the sequence is MLETVPVRCV…GTLKQALENM (85 aa).

Phosphorylated on threonine residue(s). Phosphorylated by PrkC and dephosphorylated by PrpC.

The protein resides in the cytoplasm. This is an uncharacterized protein from Bacillus subtilis (strain 168).